The following is a 196-amino-acid chain: Imidazole glycerol phosphate synthase subunit HisH (196 aa).

One can recognise a Glutamine amidotransferase type-1 domain in the interval 2–196 (KATLINYGVG…LRNFYSWVKR (195 aa)). Catalysis depends on cysteine 76, which acts as the Nucleophile. Catalysis depends on residues histidine 175 and glutamate 177.

In terms of assembly, heterodimer of HisH and HisF.

It is found in the cytoplasm. The catalysed reaction is 5-[(5-phospho-1-deoxy-D-ribulos-1-ylimino)methylamino]-1-(5-phospho-beta-D-ribosyl)imidazole-4-carboxamide + L-glutamine = D-erythro-1-(imidazol-4-yl)glycerol 3-phosphate + 5-amino-1-(5-phospho-beta-D-ribosyl)imidazole-4-carboxamide + L-glutamate + H(+). It carries out the reaction L-glutamine + H2O = L-glutamate + NH4(+). It functions in the pathway amino-acid biosynthesis; L-histidine biosynthesis; L-histidine from 5-phospho-alpha-D-ribose 1-diphosphate: step 5/9. In terms of biological role, IGPS catalyzes the conversion of PRFAR and glutamine to IGP, AICAR and glutamate. The HisH subunit catalyzes the hydrolysis of glutamine to glutamate and ammonia as part of the synthesis of IGP and AICAR. The resulting ammonia molecule is channeled to the active site of HisF. This Sulfurisphaera tokodaii (strain DSM 16993 / JCM 10545 / NBRC 100140 / 7) (Sulfolobus tokodaii) protein is Imidazole glycerol phosphate synthase subunit HisH.